We begin with the raw amino-acid sequence, 344 residues long: Heat-inducible transcription repressor HrcA (344 aa).

Belongs to the HrcA family.

Its function is as follows. Negative regulator of class I heat shock genes (grpE-dnaK-dnaJ and groELS operons). Prevents heat-shock induction of these operons. This chain is Heat-inducible transcription repressor HrcA, found in Geobacillus kaustophilus (strain HTA426).